Consider the following 877-residue polypeptide: GPI inositol-deacylase (877 aa).

A helical membrane pass occupies residues 35–55 (FLSRLFCALAVLFSYSIYQSF). Residue Ser-206 is part of the active site. N-linked (GlcNAc...) asparagine glycosylation is found at Asn-291, Asn-336, Asn-374, Asn-448, and Asn-473. Transmembrane regions (helical) follow at residues 597-617 (VLAWPVGWATVVLLFQLSDFI), 637-657 (MPICIVLLLLGATIQSQLPDF), 674-694 (PLVGILGVWTFGLLCVVSFVI), 735-755 (VLVNQVIPHQLIFLLCVILLW), 771-791 (ISTCAIFTTLLIPFKILHVAI), 809-829 (NFYYAIPPVLLVKCASCGGTI), 834-854 (VCLKACRIALIILIMSSFSVG), and 857-877 (WTWILSPIANAVLILFVASII).

The protein belongs to the GPI inositol-deacylase family.

It is found in the endoplasmic reticulum membrane. In terms of biological role, involved in inositol deacylation of GPI-anchored proteins which plays important roles in the quality control and ER-associated degradation of GPI-anchored proteins. This is GPI inositol-deacylase (BST1) from Cryptococcus neoformans var. neoformans serotype D (strain JEC21 / ATCC MYA-565) (Filobasidiella neoformans).